The chain runs to 276 residues: MAIKTYKPYTPSRRYITGVSSEDITAKASVRSLLVKLPAHAGRNNNGRITSRHKEAGAKKLYRIIDFKRRKFGIEGKVEAIEYDPYRNCRIALISYRDGEKRYILQPKGLGVGDVVCAAESGLDIKPGNAMKLRNIPVGTIVHNIELKPGKGGQMIRSAGAYAQLMGKEEKYVILRLASGEMRQVLAECMASIGEVGNEEWSNVTIGKAGRNRHRGIRPQTRGSAMNPVDHPHGGGEGKKNSGRHPVTPWGKPTKGAKTRRKKASDKLIISRRKGK.

Positions 208–276 (KAGRNRHRGI…KLIISRRKGK (69 aa)) are disordered. Over residues 230–240 (DHPHGGGEGKK) the composition is skewed to basic and acidic residues. A compositionally biased stretch (basic residues) spans 255-276 (KGAKTRRKKASDKLIISRRKGK).

The protein belongs to the universal ribosomal protein uL2 family. Part of the 50S ribosomal subunit. Forms a bridge to the 30S subunit in the 70S ribosome.

Its function is as follows. One of the primary rRNA binding proteins. Required for association of the 30S and 50S subunits to form the 70S ribosome, for tRNA binding and peptide bond formation. It has been suggested to have peptidyltransferase activity; this is somewhat controversial. Makes several contacts with the 16S rRNA in the 70S ribosome. The chain is Large ribosomal subunit protein uL2 from Campylobacter lari (strain RM2100 / D67 / ATCC BAA-1060).